We begin with the raw amino-acid sequence, 326 residues long: Thrombopoietin (326 aa).

An N-terminal signal peptide occupies residues 1–21 (MELTDLLLVAILLLTARLTLS). Intrachain disulfides connect cysteine 28–cysteine 172 and cysteine 50–cysteine 106. Asparagine 197, asparagine 206, asparagine 235, asparagine 249, and asparagine 256 each carry an N-linked (GlcNAc...) asparagine glycan. Residues 307–326 (FPPSPTFPTPGSPPQLPPVS) are disordered. The span at 308–326 (PPSPTFPTPGSPPQLPPVS) shows a compositional bias: pro residues.

Belongs to the EPO/TPO family.

The protein resides in the secreted. Lineage-specific cytokine affecting the proliferation and maturation of megakaryocytes from their committed progenitor cells. It acts at a late stage of megakaryocyte development. It may be the major physiological regulator of circulating platelets. In Rattus norvegicus (Rat), this protein is Thrombopoietin (Thpo).